The sequence spans 452 residues: MILNIKAPENIVLKPTITVFGVGGAGSNAVNNMIHANLQGANFVVANTDAQSLEHSLCINKIQLGVSTTRGLGAGASPEVGALAAQESENEIRSSLENSNMVFITAGMGGGTGTGSAPIIARIAKELGILTVGVVTKPFHFEGGHRMKTADKGLIELQQFVDTLIVIPNQNLFRIANEQTTFADAFKMADDVLHAGVRGVTDLMIMPGLINLDFADIKAVMSEMGKAMMGTGEDSGEDRAIKAAESAISNPLLDHSSMCGARGVLINITGGPDMTLFEVDNAANRIREEVDNIDANIIFGSTFNPELKGIIRVSVVATGIDADKVPKYKLAIDENTNTVPKETYNESMIQHTQIEEIPAFNNYSTENIEITDSSIKQNYTENEQELRLHVNAVNKPENNSQKSSFLWKIWGSLRASNNQTLERKNVIVNTLDQDNKESDIHDIPAFLRKKRD.

GTP contacts are provided by residues 24-28 (GAGSN), 111-113 (GTG), Glu142, Arg146, and Asp190.

It belongs to the FtsZ family. As to quaternary structure, homodimer. Polymerizes to form a dynamic ring structure in a strictly GTP-dependent manner. Interacts directly with several other division proteins.

Its subcellular location is the cytoplasm. Its function is as follows. Essential cell division protein that forms a contractile ring structure (Z ring) at the future cell division site. The regulation of the ring assembly controls the timing and the location of cell division. One of the functions of the FtsZ ring is to recruit other cell division proteins to the septum to produce a new cell wall between the dividing cells. Binds GTP and shows GTPase activity. The chain is Cell division protein FtsZ from Rickettsia typhi (strain ATCC VR-144 / Wilmington).